The sequence spans 237 residues: Class B acid phosphatase (237 aa).

Residues 1-25 (MRKVSLALSAACLLFTLNYTASALA) form the signal peptide. D69 functions as the Nucleophile in the catalytic mechanism. Mg(2+)-binding residues include D69 and D71. The Proton donor role is filled by D71. Substrate is bound by residues 137-138 (TG) and K177. D192 contributes to the Mg(2+) binding site.

The protein belongs to the class B bacterial acid phosphatase family. Homotetramer. Mg(2+) serves as cofactor.

It is found in the periplasm. The catalysed reaction is a phosphate monoester + H2O = an alcohol + phosphate. Its function is as follows. Dephosphorylates several organic phosphate monoesters. Also has a phosphotransferase activity catalyzing the transfer of low-energy phosphate groups from organic phosphate monoesters to free hydroxyl groups of various organic compounds. This is Class B acid phosphatase from Citrobacter rodentium (strain ICC168) (Citrobacter freundii biotype 4280).